Reading from the N-terminus, the 392-residue chain is Putative pectate lyase 21 (392 aa).

The N-terminal stretch at 1-21 (MSIVCTFFLFLLNTSFAFAFA) is a signal peptide. N-linked (GlcNAc...) asparagine glycosylation occurs at Asn-38. Residues Asp-189, Asp-213, and Asp-217 each contribute to the Ca(2+) site. Residue Asn-220 is glycosylated (N-linked (GlcNAc...) asparagine). The active site involves Arg-269.

The protein belongs to the polysaccharide lyase 1 family. Ca(2+) is required as a cofactor.

It catalyses the reaction Eliminative cleavage of (1-&gt;4)-alpha-D-galacturonan to give oligosaccharides with 4-deoxy-alpha-D-galact-4-enuronosyl groups at their non-reducing ends.. It functions in the pathway glycan metabolism; pectin degradation; 2-dehydro-3-deoxy-D-gluconate from pectin: step 2/5. In Arabidopsis thaliana (Mouse-ear cress), this protein is Putative pectate lyase 21.